The chain runs to 894 residues: Desmocollin-1 (894 aa).

A signal peptide spans methionine 1–alanine 29. A propeptide spanning residues cysteine 30 to arginine 134 is cleaved from the precursor. 5 consecutive Cadherin domains span residues arginine 135 to phenylalanine 242, glutamate 243 to phenylalanine 354, threonine 355 to cysteine 471, histidine 472 to proline 575, and glutamine 576 to aspartate 682. The Extracellular portion of the chain corresponds to arginine 135–arginine 691. The N-linked (GlcNAc...) asparagine glycan is linked to asparagine 165. Phosphothreonine is present on threonine 385. N-linked (GlcNAc...) asparagine glycosylation occurs at asparagine 546. The chain crosses the membrane as a helical span at residues tryptophan 692–valine 714. Topologically, residues threonine 715–lysine 894 are cytoplasmic.

Binds to JUP/plakoglobin. In terms of tissue distribution, strongly expressed in epidermis, less in lymph node and tongue.

The protein localises to the cell membrane. It localises to the cell junction. It is found in the desmosome. Functionally, a component of desmosome cell-cell junctions which are required for positive regulation of cellular adhesion. Required for desmosome adhesion strength between the granular layers of the epidermis, as a result moderates epidermal proliferation and differentiation. Is therefore required to maintain postnatal epidermal barrier function and normal hair follicle morphology into adulthood. This chain is Desmocollin-1 (DSC1), found in Homo sapiens (Human).